The sequence spans 191 residues: Adenine phosphoribosyltransferase (191 aa).

Belongs to the purine/pyrimidine phosphoribosyltransferase family. In terms of assembly, homodimer.

The protein localises to the cytoplasm. It catalyses the reaction AMP + diphosphate = 5-phospho-alpha-D-ribose 1-diphosphate + adenine. It functions in the pathway purine metabolism; AMP biosynthesis via salvage pathway; AMP from adenine: step 1/1. Functionally, catalyzes a salvage reaction resulting in the formation of AMP, that is energically less costly than de novo synthesis. This is Adenine phosphoribosyltransferase from Bordetella bronchiseptica (strain ATCC BAA-588 / NCTC 13252 / RB50) (Alcaligenes bronchisepticus).